Here is a 613-residue protein sequence, read N- to C-terminus: Alkyldihydroxyacetonephosphate synthase (613 aa).

The FAD-binding PCMH-type domain maps to 126-307; the sequence is IDRPPDAVIL…TEAVVKIERL (182 aa). Residues 158–164, 228–234, 241–244, and 291–297 contribute to the FAD site; these read PFGGGTN, DSYAYST, ARGS, and EGAFGLV. Arginine 437 contributes to the substrate binding site. The active-site Proton donor/acceptor is tyrosine 498. The segment at 534–536 is important for enzyme activity; sequence HHH. Residues 572–593 are disordered; it reads NPGKLLPSPPSEKETPKATQAR. Positions 611–613 match the Microbody targeting signal motif; that stretch reads AHL.

The protein belongs to the FAD-binding oxidoreductase/transferase type 4 family. In terms of assembly, homodimer. It depends on FAD as a cofactor.

It is found in the peroxisome. The catalysed reaction is a long chain fatty alcohol + a 1-acylglycerone 3-phosphate = a 1-O-alkylglycerone 3-phosphate + a long-chain fatty acid + H(+). It participates in glycerolipid metabolism; ether lipid biosynthesis. Catalyzes the exchange of an acyl for a long-chain alkyl group and the formation of the ether bond in the biosynthesis of ether phospholipids. The chain is Alkyldihydroxyacetonephosphate synthase from Trypanosoma brucei brucei.